The chain runs to 200 residues: uncharacterized protein (200 aa).

This is an uncharacterized protein from Treponema pallidum (strain Nichols).